A 56-amino-acid polypeptide reads, in one-letter code: UPF0434 protein Sden_2197 (56 aa).

It belongs to the UPF0434 family.

The protein is UPF0434 protein Sden_2197 of Shewanella denitrificans (strain OS217 / ATCC BAA-1090 / DSM 15013).